The chain runs to 882 residues: Serine/threonine-protein kinase greatwall (882 aa).

M1 is subject to N-acetylmethionine. The Protein kinase domain occupies 35-838 (FTIVKPISRG…MKELKRHHLF (804 aa)). ATP contacts are provided by residues 41 to 49 (ISRGAFGKV) and K62. D156 (proton acceptor) is an active-site residue. Residues T207 and T222 each carry the phosphothreonine modification. A phosphoserine mark is found at S293, S371, and S454. At T521 the chain carries Phosphothreonine. Residues S554, S558, S633, S660, and S671 each carry the phosphoserine modification. A disordered region spans residues 713–736 (TPNQVKSGTPYRTPKSVRRGAAPV). A Phosphothreonine modification is found at T725. S728 is modified (phosphoserine). The residue at position 744 (T744) is a Phosphothreonine; by CDK1. The 44-residue stretch at 839–882 (SDVDWENLQHQTMPFIPQPDDETDTSYFEARNNAQHLTISGFSL) folds into the AGC-kinase C-terminal domain. Residues S878 and S881 each carry the phosphoserine modification.

The protein belongs to the protein kinase superfamily. AGC Ser/Thr protein kinase family. Phosphorylation at Thr-744 by CDK1 during M phase activates its kinase activity. Maximum phosphorylation occurs in prometaphase.

It localises to the cytoplasm. Its subcellular location is the cytoskeleton. It is found in the microtubule organizing center. The protein resides in the centrosome. The protein localises to the nucleus. The enzyme catalyses L-seryl-[protein] + ATP = O-phospho-L-seryl-[protein] + ADP + H(+). It catalyses the reaction L-threonyl-[protein] + ATP = O-phospho-L-threonyl-[protein] + ADP + H(+). In terms of biological role, serine/threonine kinase that plays a key role in M phase by acting as a regulator of mitosis entry and maintenance. Acts by promoting the inactivation of protein phosphatase 2A (PP2A) during M phase: does not directly inhibit PP2A but acts by mediating phosphorylation and subsequent activation of ARPP19 and ENSA at 'Ser-62' and 'Ser-67', respectively. ARPP19 and ENSA are phosphatase inhibitors that specifically inhibit the PPP2R2D (PR55-delta) subunit of PP2A. Inactivation of PP2A during M phase is essential to keep cyclin-B1-CDK1 activity high. Following DNA damage, it is also involved in checkpoint recovery by being inhibited. The protein is Serine/threonine-protein kinase greatwall (MASTL) of Ailuropoda melanoleuca (Giant panda).